We begin with the raw amino-acid sequence, 80 residues long: Inner kinetochore subunit MHF2 (80 aa).

It belongs to the CENP-X/MHF2 family. In terms of assembly, the MHF histone-fold complex is a heterotetramer of 2 MHF1-MHF2 heterodimers. Together with MPH1/FANCM, forms the FANCM-MHF complex. Component of the inner kinetochore constitutive centromere-associated network (CCAN) (also known as central kinetochore CTF19 complex in yeast), which is composed of at least AME1, CHL4, CNN1, CTF3, CTF19, IML3, MCM16, MCM21, MCM22, MHF1, MHF2, MIF2, NKP1, NKP2, OKP1 and WIP1.

Its function is as follows. DNA-binding component of a FANCM-MHF complex involved in DNA damage repair and genome maintenance. FANCM-MHF promotes gene conversion at blocked replication forks, probably by reversal of the stalled fork. Component of the kinetochore, a multiprotein complex that assembles on centromeric DNA and attaches chromosomes to spindle microtubules, mediating chromosome segregation and sister chromatid segregation during meiosis and mitosis. Component of the inner kinetochore constitutive centromere-associated network (CCAN), which serves as a structural platform for outer kinetochore assembly. This is Inner kinetochore subunit MHF2 from Saccharomyces cerevisiae (strain ATCC 204508 / S288c) (Baker's yeast).